The following is a 357-amino-acid chain: 3-isopropylmalate dehydrogenase (357 aa).

76–89 (GYQWESLDISVRPE) contacts NAD(+). Substrate contacts are provided by Arg96, Arg106, Arg134, and Asp224. Mg(2+)-binding residues include Asp224, Asp248, and Asp252. 282 to 294 (GSAPDIAGQNIAN) contributes to the NAD(+) binding site.

This sequence belongs to the isocitrate and isopropylmalate dehydrogenases family. LeuB type 1 subfamily. Homodimer. The cofactor is Mg(2+). It depends on Mn(2+) as a cofactor.

Its subcellular location is the cytoplasm. The catalysed reaction is (2R,3S)-3-isopropylmalate + NAD(+) = 4-methyl-2-oxopentanoate + CO2 + NADH. It participates in amino-acid biosynthesis; L-leucine biosynthesis; L-leucine from 3-methyl-2-oxobutanoate: step 3/4. In terms of biological role, catalyzes the oxidation of 3-carboxy-2-hydroxy-4-methylpentanoate (3-isopropylmalate) to 3-carboxy-4-methyl-2-oxopentanoate. The product decarboxylates to 4-methyl-2 oxopentanoate. The protein is 3-isopropylmalate dehydrogenase of Hydrogenovibrio crunogenus (strain DSM 25203 / XCL-2) (Thiomicrospira crunogena).